We begin with the raw amino-acid sequence, 1297 residues long: DNA-directed RNA polymerase subunit beta'' (1297 aa).

Cysteine 220, cysteine 293, cysteine 300, and cysteine 303 together coordinate Zn(2+). Over residues 1278–1288 (RRRKQNTKTRK) the composition is skewed to basic residues. The disordered stretch occupies residues 1278–1297 (RRRKQNTKTRKNNLFSLNEK).

This sequence belongs to the RNA polymerase beta' chain family. RpoC2 subfamily. In terms of assembly, in plastids the minimal PEP RNA polymerase catalytic core is composed of four subunits: alpha, beta, beta', and beta''. When a (nuclear-encoded) sigma factor is associated with the core the holoenzyme is formed, which can initiate transcription. Requires Zn(2+) as cofactor.

It localises to the plastid. The protein localises to the chloroplast. It catalyses the reaction RNA(n) + a ribonucleoside 5'-triphosphate = RNA(n+1) + diphosphate. In terms of biological role, DNA-dependent RNA polymerase catalyzes the transcription of DNA into RNA using the four ribonucleoside triphosphates as substrates. The protein is DNA-directed RNA polymerase subunit beta'' of Welwitschia mirabilis (Tree tumbo).